A 7968-amino-acid chain; its full sequence is MDQPQFSGAPRFLTRPKAFVVSVGKDATLSCQIVGNPTPQVSWEKDQQPVAAGARFRLAQDGDLYRLTILDLALGDSGQYVCRARNAIGEAFAAVGLQVDAEAACAEQAPHFLLRPTSIRVREGSEATFRCRVGGSPRPAVSWSKDGRRLGEPDGPRVRVEELGEASALRIRAARPRDGGTYEVRAENPLGAASAAAALVVDSDAADTASRPGTSTAALLAHLQRRREAMRAEGAPASPPSTGTRTCTVTEGKHARLSCYVTGEPKPETVWKKDGQLVTEGRRHVVYEDAQENFVLKILFCKQSDRGLYTCTASNLVGQTYSSVLVVVREPAVPFKKRLQDLEVREKESATFLCEVPQPSTEAAWFKEETRLWASAKYGIEEEGTERRLTVRNVSADDDAVYICETPEGSRTVAELAVQGNLLRKLPRKTAVRVGDTAMFCVELAVPVGPVHWLRNQEEVVAGGRVAISAEGTRHTLTISQCCLEDVGQVAFMAGDCQTSTQFCVSAPRKPPLQPPVDPVVKARMESSVILSWSPPPHGERPVTIDGYLVEKKKLGTYTWIRCHEAEWVATPELTVADVAEEGNFQFRVSALNSFGQSPYLEFPGTVHLAPKLAVRTPLKAVQAVEGGEVTFSVDLTVASAGEWFLDGQALKASSVYEIHCDRTRHTLTIREVPASLHGAQLKFVANGIESSIRMEVRAAPGLTANKPPAAAAREVLARLHEEAQLLAELSDQAAAVTWLKDGRTLSPGPKYEVQASAGRRVLLVRDVARDDAGLYECVSRGGRIAYQLSVQGLARFLHKDMAGSCVDAVAGGPAQFECETSEAHVHVHWYKDGMELGHSGERFLQEDVGTRHRLVAATVTRQDEGTYSCRVGEDSVDFRLRVSEPKVVFAKEQLARRKLQAEAGASATLSCEVAQAQTEVTWYKDGKKLSSSSKVCMEATGCTRRLVVQQAGQADAGEYSCEAGGQRLSFHLDVKEPKVVFAKDQVAHSEVQAEAGASATLSCEVAQAQTEVMWYKDGKKLSSSLKVHVEAKGCRRRLVVQQAGKTDAGDYSCEARGQRVSFRLHITEPKMMFAKEQSVHNEVQAEAGASAMLSCEVAQAQTEVTWYKDGKKLSSSSKVGMEVKGCTRRLVLPQAGKADAGEYSCEAGGQRVSFHLHITEPKGVFAKEQSVHNEVQAEAGTTAMLSCEVAQPQTEVTWYKDGKKLSSSSKVRMEVKGCTRRLVVQQVGKADAGEYSCEAGGQRVSFQLHITEPKAVFAKEQLVHNEVRTEAGASATLSCEVAQAQTEVTWYKDGKKLSSSSKVRIEAAGCMRQLVVQQAGQADAGEYTCEAGGQRLSFHLDVSEPKAVFAKEQLAHRKVQAEAGAIATLSCEVAQAQTEVTWYKDGKKLSSSSKVRMEAVGCTRRLVVQQACQADTGEYSCEAGGQRLSFSLDVAEPKVVFAKEQPVHREVQAQAGASTTLSCEVAQAQTEVMWYKDGKKLSFSSKVRMEAVGCTRRLVVQQAGQAVAGEYSCEAGSQRLSFHLHVAEPKAVFAKEQPASREVQAEAGTSATLSCEVAQAQTEVTWYKDGKKLSSSSKVRMEAVGCTRRLVVQEAGQADAGEYSCKAGDQRLSFHLHVAEPKVVFAKEQPAHREVQAEAGASATLSCEVAQAQTEVTWYKDGKKLSSSSKVRVEAVGCTRRLVVQQAGQAEAGEYSCEAGGQQLSFRLHVAELEPQISERPCRREPLVVKEHEDIILTATLATPSAATVTWLKDGVEIRRSKRHETASQGDTHTLTVHGAQVLDSAIYSCRVGAEGQDFPVQVEEVAAKFCRLLEPVCGELGGTVTLACELSPACAEVVWRCGNTQLRVGKRFQMVAEGPVRSLTVLGLRAEDAGEYVCESRDDHTSAQLTVSVPRVVKFMSGLSTVVAEEGGEATFQCVVSPSDVAVVWFRDGALLQPSEKFAISQSGASHSLTISDLVLEDAGQITVEAEGASSSAALRVREAPVLFKKKLEPQTVEERSSVTLEVELTRPWPELRWTRNATALAPGKNVEIHAEGARHRLVLHNVGFADRGFFGCETPDDKTQAKLTVEMRQVRLVRGLQAVEAREQGTATMEVQLSHADVDGSWTRDGLRFQQGPTCHLAVRGPMHTLTLSGLRPEDSGLMVFKAEGVHTSARLVVTELPVSFSRPLQDVVTTEKEKVTLECELSRPNVDVRWLKDGVELRAGKTMAIAAQGACRSLTIYRCEFADQGVYVCDAHDAQSSASVKVQGRTYTLIYRRVLAEDAGEIQFVAENAESRAQLRVKELPVTLVRPLRDKIAMEKHRGVLECQVSRASAQVRWFKGSQELQPGPKYELVSDGLYRKLIISDVHAEDEDTYTCDAGDVKTSAQFFVEEQSITIVRGLQDVTVMEPAPAWFECETSIPSVRPPKWLLGKTVLQAGGNVGLEQEGTVHRLMLRRTCSTMTGPVHFTVGKSRSSARLVVSDIPVVLTRPLEPKTGRELQSVVLSCDFRPAPKAVQWYKDDTPLSPSEKFKMSLEGQMAELRILRLMPADAGVYRCQAGSAHSSTEVTVEAREVTVTGPLQDAEATEEGWASFSCELSHEDEEVEWSLNGMPLYNDSFHEISHKGRRHTLVLKSIQRADAGIVRASSLKVSTSARLEVRVKPVVFLKALDDLSAEERGTLALQCEVSDPEAHVVWRKDGVQLGPSDKYDFLHTAGTRGLVVHDVSPEDAGLYTCHVGSEETRARVRVHDLHVGITKRLKTMEVLEGESCSFECVLSHESASDPAMWTVGGKTVGSSSRFQATRQGRKYILVVREAAPSDAGEVVFSVRGLTSKASLIVRERPAAIIKPLEDQWVAPGEDVELRCELSRAGTPVHWLKDRKAIRKSQKYDVVCEGTMAMLVIRGASLKDAGEYTCEVEASKSTASLHVEEKANCFTEELTNLQVEEKGTAVFTCKTEHPAATVTWRKGLLELRASGKHQPSQEGLTLRLTISALEKADSDTYTCDIGQAQSRAQLLVQGRRVHIIEDLEDVDVQEGSSATFRCRISPANYEPVHWFLDKTPLHANELNEIDAQPGGYHVLTLRQLALKDSGTIYFEAGDQRASAALRVTEKPSVFSRELTDATITEGEDLTLVCETSTCDIPVCWTKDGKTLRGSARCQLSHEGHRAQLLITGATLQDSGRYKCEAGGACSSSIVRVHARPVRFQEALKDLEVLEGGAATLRCVLSSVAAPVKWCYGNNVLRPGDKYSLRQEGAMLELVVRNLRPQDSGRYSCSFGDQTTSATLTVTALPAQFIGKLRNKEATEGATATLRCELSKAAPVEWRKGSETLRDGDRYCLRQDGAMCELQIRGLAMVDAAEYSCVCGEERTSASLTIRPMPAHFIGRLRHQESIEGATATLRCELSKAAPVEWRKGRESLRDGDRHSLRQDGAVCELQICGLAVADAGEYSCVCGEERTSATLTVKALPAKFTEGLRNEEAVEGATAMLWCELSKVAPVEWRKGPENLRDGDRYILRQEGTRCELQICGLAMADAGEYLCVCGQERTSATLTIRALPARFIEDVKNQEAREGATAVLQCELNSAAPVEWRKGSETLRDGDRYSLRQDGTKCELQIRGLAMADTGEYSCVCGQERTSAMLTVRALPIKFTEGLRNEEATEGATAVLRCELSKMAPVEWWKGHETLRDGDRHSLRQDGARCELQIRGLVAEDAGEYLCMCGKERTSAMLTVRAMPSKFIEGLRNEEATEGDTATLWCELSKAAPVEWRKGHETLRDGDRHSLRQDGSRCELQIRGLAVVDAGEYSCVCGQERTSATLTVRALPARFIEDVKNQEAREGATAVLQCELSKAAPVEWRKGSETLRGGDRYSLRQDGTRCELQIHGLSVADTGEYSCVCGQERTSATLTVKAPQPVFREPLQSLQAEEGSTATLQCELSEPTATVVWSKGGLQLQANGRREPRLQGCTAELVLQDLQREDTGEYTCTCGSQATSATLTVTAAPVRFLRELQHQEVDEGGTAHLCCELSRAGASVEWRKGSLQLFPCAKYQMVQDGAAAELLVRGVEQEDAGDYTCDTGHTQSMASLSVRVPRPKFKTRLQSLEQETGDIARLCCQLSDAESGAVVQWLKEGVELHAGPKYEMRSQGATRELLIHQLEAKDTGEYACVTGGQKTAASLRVTEPEVTIVRGLVDAEVTADEDVEFSCEVSRAGATGVQWCLQGLPLQSNEVTEVAVRDGRIHTLRLKGVTPEDAGTVSFHLGNHASSAQLTVRAPEVTILEPLQDVQLSEGQDASFQCRLSRASGQEARWALGGVPLQANEMNDITVEQGTLHLLTLHKVTLEDAGTVSFHVGTCSSEAQLKVTAKNTVVRGLENVEALEGGEALFECQLSQPEVAAHTWLLDDEPVHTSENAEVVFFENGLRHLLLLKNLRPQDSCRVTFLAGDMVTSAFLTVRGWRLEILEPLKNAAVRAGAQACFTCTLSEAVPVGEASWYINGAAVQPDDSDWTVTADGSHHALLLRSAQPHHAGEVTFACRDAVASARLTVLGLPDPPEDAEVVARSSHTVTLSWAAPMSDGGGGLCGYRVEVKEGATGQWRLCHELVPGPECVVDGLAPGETYRFRVAAVGPVGAGEPVHLPQTVRLAEPPKPVPPQPSAPESRQVAAGEDVSLELEVVAEAGEVIWHKGMERIQPGGRFEVVSQGRQQMLVIKGFTAEDQGEYHCGLAQGSICPAAATFQVALSPASVDEAPQPSLPPEAAQEGDLHLLWEALARKRRMSREPTLDSISELPEEDGRSQRLPQEAEEVAPDLSEGYSTADELARTGDADLSHTSSDDESRAGTPSLVTYLKKAGRPGTSPLASKVGAPAAPSVKPQQQQEPLAAVRPPLGDLSTKDLGDPSMDKAAVKIQAAFKGYKVRKEMKQQEGPMFSHTFGDTEAQVGDALRLECVVASKADVRARWLKDGVELTDGRHHHIDQLGDGTCSLLITGLDRADAGCYTCQVSNKFGQVTHSACVVVSGSESEAESSSGGELDDAFRRAARRLHRLFRTKSPAEVSDEELFLSADEGPAEPEEPADWQTYREDEHFICIRFEALTEARQAVTRFQEMFATLGIGVEIKLVEQGPRRVEMCISKETPAPVVPPEPLPSLLTSDAAPVFLTELQNQEVQDGYPVSFDCVVTGQPMPSVRWFKDGKLLEEDDHYMINEDQQGGHQLIITAVVPADMGVYRCLAENSMGVSSTKAELRVDLTSTDYDTAADATESSSYFSAQGYLSSREQEGTESTTDEGQLPQVVEELRDLQVAPGTRLAKFQLKVKGYPAPRLYWFKDGQPLTASAHIRMTDKKILHTLEIISVTREDSGQYAAYISNAMGAAYSSARLLVRGPDEPEEKPASDVHEQLVPPRMLERFTPKKVKKGSSITFSVKVEGRPVPTVHWLREEAERGVLWIGPDTPGYTVASSAQQHSLVLLDVGRQHQGTYTCIASNAAGQALCSASLHVSGLPKVEEQEKVKEALISTFLQGTTQAISAQGLETASFADLGGQRKEEPLAAKEALGHLSLAEVGTEEFLQKLTSQITEMVSAKITQAKLQVPGGDSDEDSKTPSASPRHGRSRPSSSIQESSSESEDGDARGEIFDIYVVTADYLPLGAEQDAITLREGQYVEVLDAAHPLRWLVRTKPTKSSPSRQGWVSPAYLDRRLKLSPEWGAAEAPEFPGEAVSEDEYKARLSSVIQELLSSEQAFVEELQFLQSHHLQHLERCPHVPIAVAGQKAVIFRNVRDIGRFHSSFLQELQQCDTDDDVAMCFIKNQAAFEQYLEFLVGRVQAESVVVSTAIQEFYKKYAEEALLAGDPSQPPPPPLQHYLEQPVERVQRYQALLKELIRNKARNRQNCALLEQAYAVVSALPQRAENKLHVSLMENYPGTLQALGEPIRQGHFIVWEGAPGARMPWKGHNRHVFLFRNHLVICKPRRDSRTDTVSYVFRNMMKLSSIDLNDQVEGDDRAFEVWQEREDSVRKYLLQARTAIIKSSWVKEICGIQQRLALPVWRPPDFEEELADCTAELGETVKLACRVTGTPKPVISWYKDGKAVQVDPHHILIEDPDGSCALILDSLTGVDSGQYMCFAASAAGNCSTLGKILVQVPPRFVNKVRASPFVEGEDAQFTCTIEGAPYPQIRWYKDGALLTTGNKFQTLSEPRSGLLVLVIRAASKEDLGLYECELVNRLGSARASAELRIQSPMLQAQEQCHREQLVAAVEDTTLERADQEVTSVLKRLLGPKAPGPSTGDLTGPGPCPRGAPALQETGSQPPVTGTSEAPAVPPRVPQPLLHEGPEQEPEAIARAQEWTVPIRMEGAAWPGAGTGELLWDVHSHVVRETTQRTYTYQAIDTHTARPPSMQVTIEDVQAQTGGTAQFEAIIEGDPQPSVTWYKDSVQLVDSTRLSQQQEGTTYSLVLRHVASKDAGVYTCLAQNTGGQVLCKAELLVLGGDNEPDSEKQSHRRKLHSFYEVKEEIGRGVFGFVKRVQHKGNKILCAAKFIPLRSRTRAQAYRERDILAALSHPLVTGLLDQFETRKTLILILELCSSEELLDRLYRKGVVTEAEVKVYIQQLVEGLHYLHSHGVLHLDIKPSNILMVHPAREDIKICDFGFAQNITPAELQFSQYGSPEFVSPEIIQQNPVSEASDIWAMGVISYLSLTCSSPFAGESDRATLLNVLEGRVSWSSPMAAHLSEDAKDFIKATLQRAPQARPSAAQCLSHPWFLKSMPAEEAHFINTKQLKFLLARSRWQRSLMSYKSILVMRSIPELLRGPPDSPSLGVARHLCRDTGGSSSSSSSSDNELAPFARAKSLPPSPVTHSPLLHPRGFLRPSASLPEEAEASERSTEAPAPPASPEGAGPPAAQGCVPRHSVIRSLFYHQAGESPEHGALAPGSRRHPARRRHLLKGGYIAGALPGLREPLMEHRVLEEEAAREEQATLLAKAPSFETALRLPASGTHLAPGHSHSLEHDSPSTPRPSSEACGEAQRLPSAPSGGAPIRDMGHPQGSKQLPSTGGHPGTAQPERPSPDSPWGQPAPFCHPKQGSAPQEGCSPHPAVAPCPPGSFPPGSCKEAPLVPSSPFLGQPQAPPAPAKASPPLDSKMGPGDISLPGRPKPGPCSSPGSASQASSSQVSSLRVGSSQVGTEPGPSLDAEGWTQEAEDLSDSTPTLQRPQEQATMRKFSLGGRGGYAGVAGYGTFAFGGDAGGMLGQGPMWARIAWAVSQSEEEEQEEARAESQSEEQQEARAESPLPQVSARPVPEVGRAPTRSSPEPTPWEDIGQVSLVQIRDLSGDAEAADTISLDISEVDPAYLNLSDLYDIKYLPFEFMIFRKVPKSAQPEPPSPMAEEELAEFPEPTWPWPGELGPHAGLEITEESEDVDALLAEAAVGRKRKWSSPSRSLFHFPGRHLPLDEPAELGLRERVKASVEHISRILKGRPEGLEKEGPPRKKPGLASFRLSGLKSWDRAPTFLRELSDETVVLGQSVTLACQVSAQPAAQATWSKDGAPLESSSRVLISATLKNFQLLTILVVVAEDLGVYTCSVSNALGTVTTTGVLRKAERPSSSPCPDIGEVYADGVLLVWKPVESYGPVTYIVQCSLEGGSWTTLASDIFDCCYLTSKLSRGGTYTFRTACVSKAGMGPYSSPSEQVLLGGPSHLASEEESQGRSAQPLPSTKTFAFQTQIQRGRFSVVRQCWEKASGRALAAKIIPYHPKDKTAVLREYEALKGLRHPHLAQLHAAYLSPRHLVLILELCSGPELLPCLAERASYSESEVKDYLWQMLSATQYLHNQHILHLDLRSENMIITEYNLLKVVDLGNAQSLSQEKVLPSDKFKDYLETMAPELLEGQGAVPQTDIWAIGVTAFIMLSAEYPVSSEGARDLQRGLRKGLVRLSRCYAGLSGGAVAFLRSTLCAQPWGRPCASSCLQCPWLTEEGPACSRPAPVTFPTARLRVFVRNREKRRALLYKRHNLAQVR.

Ig-like domains are found at residues 10–100 (PRFL…LQVD), 110–202 (PHFL…LVVD), 236–322 (PASP…QTYS), 331–414 (PAVP…RTVA), and 420–508 (GNLL…VSAP). A disulfide bridge connects residues Cys-31 and Cys-82. Residues 228–249 (EAMRAEGAPASPPSTGTRTCTV) are disordered. A compositionally biased stretch (polar residues) spans 240–249 (PSTGTRTCTV). Cystine bridges form between Cys-259–Cys-311 and Cys-354–Cys-404. Residue Ser-395 is modified to Phosphoserine. The Fibronectin type-III 1 domain occupies 515–612 (PPVDPVVKAR…FPGTVHLAPK (98 aa)). Ig-like domains follow at residues 619 to 698 (LKAV…MEVR), 701 to 790 (PGLT…YQLS), 798 to 884 (LHKD…LRVS), 886 to 977 (PKVV…DVKE), 978 to 1066 (PKVV…FRLH), 1070 to 1161 (PKMM…HITE), 1162 to 1252 (PKGV…LHIT), 1254 to 1345 (PKAV…DVSE), 1346 to 1432 (PKAV…LSFS), 1438 to 1524 (PKVV…LSFH), 1530 to 1621 (PKAV…HVAE), and 1622 to 1719 (PKVV…PQIS). Cystine bridges form between Cys-819–Cys-870, Cys-912–Cys-962, Cys-1004–Cys-1054, Cys-1096–Cys-1146, Cys-1188–Cys-1238, Cys-1280–Cys-1330, Cys-1372–Cys-1422, Cys-1464–Cys-1514, Cys-1556–Cys-1606, Cys-1648–Cys-1698, Cys-1723–Cys-1791, and Cys-1830–Cys-1880. The Fibronectin type-III 2 domain maps to 1731-1808 (KEHEDIILTA…DFPVQVEEVA (78 aa)). Ig-like domains follow at residues 1809-1894 (AKFC…LTVS), 1896-1982 (PRVV…AALR), 1987-2071 (PVLF…AKLT), 2077-2162 (VRLV…LVVT), 2165-2249 (PVSF…ASVK), 2289-2380 (PVTL…QSIT), 2468-2559 (PVVL…REVT), 2564-2643 (LQDA…LEVR), 2646-2730 (PVVF…ARVR), 2736-2823 (VGIT…LIVR), 2826-2908 (PAAI…STAS), 2920-2999 (EELT…AQLL), 3003-3092 (RRVH…LRVT), 3095-3183 (PSVF…VHAR), 3184-3268 (PVRF…ATLT), 3273-3356 (PAQF…ASLT), 3359-3444 (PMPA…ATLT), 3449-3532 (PAKF…ATLT), 3537-3620 (PARF…AMLT), 3625-3708 (PIKF…AMLT), 3713-3796 (PSKF…ATLT), 3801-3884 (PARF…ATLT), 3890-3973 (PVFR…ATLT), 3978-4062 (PVRF…ASLS), 4068-4160 (PKFK…PEVT), 4171-4239 (TADE…NHAS), 4248-4337 (PEVT…LKVT), 4340-4427 (NTVV…FLTV), and 4430-4518 (WRLE…ARLT). 3 disulfides stabilise this stretch: Cys-2187–Cys-2237, Cys-2311–Cys-2361, and Cys-2490–Cys-2540. A disulfide bond links Cys-2668 and Cys-2718. 2 disulfide bridges follow: Cys-2848/Cys-2898 and Cys-2937/Cys-2987. Phosphoserine is present on Ser-2889. Intrachain disulfides connect Cys-3117–Cys-3167, Cys-3206–Cys-3256, Cys-3295–Cys-3344, Cys-3383–Cys-3432, Cys-3471–Cys-3520, Cys-3559–Cys-3608, Cys-3647–Cys-3696, Cys-3735–Cys-3784, Cys-3823–Cys-3872, Cys-3911–Cys-3961, Cys-4000–Cys-4050, and Cys-4089–Cys-4141. Phosphoserine is present on Ser-4015. Cys-4453 and Cys-4508 are oxidised to a cystine. In terms of domain architecture, Fibronectin type-III 3 spans 4525–4619 (PPEDAEVVAR…LPQTVRLAEP (95 aa)). One can recognise an Ig-like 47 domain in the interval 4624-4714 (PPQPSAPESR…AAATFQVALS (91 aa)). Residues 4749-4785 (MSREPTLDSISELPEEDGRSQRLPQEAEEVAPDLSEG) form a disordered region. Ser-4750 bears the Phosphoserine mark. Thr-4754 is subject to Phosphothreonine. At Ser-4757 the chain carries Phosphoserine. Thr-4788 is subject to Phosphothreonine. The residue at position 4805 (Ser-4805) is a Phosphoserine. The tract at residues 4820 to 4860 (LKKAGRPGTSPLASKVGAPAAPSVKPQQQQEPLAAVRPPLG) is disordered. In terms of domain architecture, IQ spans 4872–4901 (MDKAAVKIQAAFKGYKVRKEMKQQEGPMFS). Ig-like domains are found at residues 4898–4989 (PMFS…VVVS) and 5126–5215 (PVFL…AELR). Disulfide bonds link Cys-4919–Cys-4971 and Cys-5147–Cys-5199. Positions 5238–5256 (AQGYLSSREQEGTESTTDE) are enriched in polar residues. The interval 5238–5257 (AQGYLSSREQEGTESTTDEG) is disordered. Ig-like domains are found at residues 5260–5349 (PQVV…ARLL) and 5371–5467 (PRML…LHVS). A disordered region spans residues 5554–5596 (AKLQVPGGDSDEDSKTPSASPRHGRSRPSSSIQESSSESEDGD). Position 5563 is a phosphoserine (Ser-5563). Residue Thr-5569 is modified to Phosphothreonine. A compositionally biased stretch (low complexity) spans 5570 to 5589 (PSASPRHGRSRPSSSIQESS). Residues Ser-5571 and Ser-5573 each carry the phosphoserine modification. One can recognise an SH3 domain in the interval 5600 to 5667 (EIFDIYVVTA…SPAYLDRRLK (68 aa)). The region spanning 5693-5877 (RLSSVIQELL…SALPQRAENK (185 aa)) is the DH domain. The PH domain maps to 5895–6004 (EPIRQGHFIV…WVKEICGIQQ (110 aa)). Arg-5975 contacts a 1,2-diacyl-sn-glycero-3-phospho-(1D-myo-inositol-4,5-bisphosphate). Arg-5980 is an a 1,2-diacyl-sn-glycero-3-phospho-(1D-myo-inositol-3,4-bisphosphate) binding site. Ig-like domains follow at residues 6014-6097 (PDFE…GNCS) and 6108-6200 (PRFV…LRIQ). Disulfide bonds link Cys-6035–Cys-6087 and Cys-6129–Cys-6182. The tract at residues 6237-6296 (RLLGPKAPGPSTGDLTGPGPCPRGAPALQETGSQPPVTGTSEAPAVPPRVPQPLLHEGPE) is disordered. Over residues 6266-6277 (ETGSQPPVTGTS) the composition is skewed to polar residues. An Ig-like 54 domain is found at 6357 to 6445 (PSMQVTIEDV…GQVLCKAELL (89 aa)). A Protein kinase 1 domain is found at 6468-6721 (YEVKEEIGRG…AAQCLSHPWF (254 aa)). ATP-binding positions include 6474 to 6482 (IGRGVFGFV) and Lys-6497. Asp-6587 (proton acceptor) is an active-site residue. Disordered regions lie at residues 6777–6863 (GVAR…AQGC), 6952–7176 (SGTH…TMRK), and 7217–7272 (VSQS…TPWE). At Ser-6831 the chain carries Phosphoserine. The segment covering 7052–7061 (AVAPCPPGSF) has biased composition (pro residues). The span at 7115–7139 (SSPGSASQASSSQVSSLRVGSSQVG) shows a compositional bias: low complexity. Over residues 7160–7172 (DSTPTLQRPQEQA) the composition is skewed to polar residues. Basic and acidic residues predominate over residues 7227 to 7242 (EARAESQSEEQQEARA). Ser-7244 carries the phosphoserine modification. An Ig-like 55 domain is found at 7463–7552 (PTFLRELSDE…GTVTTTGVLR (90 aa)). Residues Cys-7484 and Cys-7536 are joined by a disulfide bond. The region spanning 7557–7649 (PSSSPCPDIG…PSEQVLLGGP (93 aa)) is the Fibronectin type-III 4 domain. Residues 7672–7924 (FAFQTQIQRG…ASSCLQCPWL (253 aa)) form the Protein kinase 2 domain. Residues 7678–7686 (IQRGRFSVV) and Lys-7701 each bind ATP. Asp-7791 (proton acceptor) is an active-site residue.

This sequence belongs to the protein kinase superfamily. CAMK Ser/Thr protein kinase family. In terms of assembly, interacts (via protein kinase domain 2) with CDH2 and (via protein kinase domain 1) with ATP1B1. Isoform 3 interacts with TTN/titin and calmodulin. Isoform 3 interacts with ANK1 isoform Mu17/ank1.5. It depends on Mg(2+) as a cofactor. Autophosphorylated by protein kinase domains 1 and 2.

It localises to the cytoplasm. The protein resides in the myofibril. Its subcellular location is the sarcomere. It is found in the m line. The protein localises to the z line. It localises to the cell membrane. The protein resides in the sarcolemma. Its subcellular location is the nucleus. The enzyme catalyses L-seryl-[protein] + ATP = O-phospho-L-seryl-[protein] + ADP + H(+). It catalyses the reaction L-threonyl-[protein] + ATP = O-phospho-L-threonyl-[protein] + ADP + H(+). In terms of biological role, structural component of striated muscles which plays a role in myofibrillogenesis. Probably involved in the assembly of myosin into sarcomeric A bands in striated muscle. Has serine/threonine protein kinase activity and phosphorylates N-cadherin CDH2 and sodium/potassium-transporting ATPase subunit ATP1B1. Binds (via the PH domain) strongly to phosphatidylinositol 3,4-bisphosphate (PtdIns(3,4)P2) and phosphatidylinositol 4,5-bisphosphate (PtdIns(4,5)P2), and to a lesser extent to phosphatidylinositol 3-phosphate (PtdIns(3)P), phosphatidylinositol 4-phosphate (PtdIns(4)P), phosphatidylinositol 5-phosphate (PtdIns(5)P) and phosphatidylinositol 3,4,5-trisphosphate (PtdIns(3,4,5)P3). The sequence is that of Obscurin (OBSCN) from Homo sapiens (Human).